A 184-amino-acid chain; its full sequence is GTP cyclohydrolase 1 (184 aa).

3 residues coordinate Zn(2+): Cys75, His78, and Cys146.

This sequence belongs to the GTP cyclohydrolase I family. Homomer.

It carries out the reaction GTP + H2O = 7,8-dihydroneopterin 3'-triphosphate + formate + H(+). Its pathway is cofactor biosynthesis; 7,8-dihydroneopterin triphosphate biosynthesis; 7,8-dihydroneopterin triphosphate from GTP: step 1/1. The polypeptide is GTP cyclohydrolase 1 (Streptococcus pneumoniae serotype 19F (strain G54)).